The sequence spans 404 residues: Zinc finger CCCH domain-containing protein 3 (404 aa).

5 consecutive C3H1-type zinc fingers follow at residues 47 to 75 (RPGE…HPTH), 90 to 118 (RIGQ…HPKD), 135 to 163 (RLGE…HPQP), 261 to 289 (SSDQ…HPGV), and 307 to 335 (RPGQ…HPML). Residues 350–374 (FASPVTTHQRISPTPNRSDSKSLSN) are compositionally biased toward polar residues. The interval 350-404 (FASPVTTHQRISPTPNRSDSKSLSNGKPDVKKESSETEKPDNGEVQDLSEDASSP) is disordered. A compositionally biased stretch (basic and acidic residues) spans 377 to 391 (PDVKKESSETEKPDN).

It is found in the nucleus. In terms of biological role, possesses RNA-binding and ribonuclease activities in vitro. The polypeptide is Zinc finger CCCH domain-containing protein 3 (Arabidopsis thaliana (Mouse-ear cress)).